Here is a 66-residue protein sequence, read N- to C-terminus: Large ribosomal subunit protein uL29 (66 aa).

It belongs to the universal ribosomal protein uL29 family.

In Ruegeria pomeroyi (strain ATCC 700808 / DSM 15171 / DSS-3) (Silicibacter pomeroyi), this protein is Large ribosomal subunit protein uL29.